A 429-amino-acid polypeptide reads, in one-letter code: MKSSYNLRSIAAKVVGQVLDQGQSLSALLPVHQREVSEKDRALLQELCFGVLRVLPQLEWCIQQLMAKPLTGKQRTLHYLIMVGIYQLHYTRIPPHAALAETVEGAVALKRPQLKGLINGVLRQFQRQQEELIQREANHSSHYLHPSWLLARIEHAYPNHWQTIVEANNQRPPMWLRVNRLHHTREAYLNLLAQEGIEAFPHTEFTDAIRLASPCAVDQLPGFSQGWATVQDASAQGCVYWLDPQDGEQILDLCAAPGGKTTHILEAAPQSHVLAVDIDETRLGRVKENLLRLQMHAEVKQGDGRYPDSWCEGRMFDRILLDAPCSATGVIRRHPDIKWLRRDRDIEELVALQKEIFDAIWPHLKVGGTMVYATCSILPQENAQQVTDFLTRHADATLVDTGTRELPGIQMLPHADGGDGFFYAKLVKN.

S-adenosyl-L-methionine-binding positions include 254–260 (CAAPGGK), aspartate 277, aspartate 303, and aspartate 322. The active-site Nucleophile is the cysteine 375.

The protein belongs to the class I-like SAM-binding methyltransferase superfamily. RsmB/NOP family.

It is found in the cytoplasm. It catalyses the reaction cytidine(967) in 16S rRNA + S-adenosyl-L-methionine = 5-methylcytidine(967) in 16S rRNA + S-adenosyl-L-homocysteine + H(+). Specifically methylates the cytosine at position 967 (m5C967) of 16S rRNA. The protein is Ribosomal RNA small subunit methyltransferase B of Pectobacterium carotovorum subsp. carotovorum (strain PC1).